We begin with the raw amino-acid sequence, 230 residues long: RNA chaperone ProQ (230 aa).

The segment covering 105 to 125 (EAKARVQAQREQHQAKKREAG) has biased composition (basic and acidic residues). Residues 105 to 182 (EAKARVQAQR…EQRKPVTDTT (78 aa)) form a disordered region. Residues 154–167 (PSRPQAARPASAPR) are compositionally biased toward low complexity. The span at 168 to 178 (AESRVEQRKPV) shows a compositional bias: basic and acidic residues.

This sequence belongs to the ProQ family.

It localises to the cytoplasm. RNA chaperone with significant RNA binding, RNA strand exchange and RNA duplexing activities. May regulate ProP activity through an RNA-based, post-transcriptional mechanism. The sequence is that of RNA chaperone ProQ from Erwinia tasmaniensis (strain DSM 17950 / CFBP 7177 / CIP 109463 / NCPPB 4357 / Et1/99).